An 875-amino-acid polypeptide reads, in one-letter code: GATOR2 complex protein MIOS (875 aa).

WD repeat units lie at residues 58-100, 111-155, 182-221, 223-261, 265-306, 320-360, and 395-437; these read SDTP…NSKF, KHAR…TPDI, GQND…QKMF, NTKA…KPVL, EQPK…TPIG, PCDN…SLAW, and RLRA…KQYT. The C4-type zinc finger occupies 735 to 781; it reads VSCNFCGKSISYSCSSVPHQGRGFSQYGVSGSPTKSKVTSCPGCRKP. Cys737 and Cys740 together coordinate Zn(2+). Phosphoserine occurs at positions 759 and 766. Zn(2+) contacts are provided by Cys775, Cys778, Cys788, Cys827, Cys830, His832, His835, His838, Cys849, Cys854, and Cys858. The RING-type; atypical zinc-finger motif lies at 782-863; that stretch reads LPRCALCLIN…CTCKCMQLDT (82 aa).

This sequence belongs to the WD repeat mio family. Component of the GATOR2 subcomplex, composed of MIOS, SEC13, SEH1L, WDR24 and WDR59. The GATOR2 complex interacts with CASTOR1 and CASTOR2; the interaction is negatively regulated by arginine. CASTOR1 and CASTOR2 convey leucine availability via direct interaction with MIOS. The GATOR2 complex interacts with SESN1, SESN2 and SESN3; the interaction is negatively regulated by amino acids. Interacts with SAR1A and SAR1B; the interaction is direct, disrupted by leucine and mediates the interaction of SAR1A or SAR1B with the GATOR2 complex to negatively regulate the TORC1 signaling upon leucine deprivation. In terms of tissue distribution, widely expressed. In brain, expressed in neurons and glia (oligodendrocytes and astrocytes), with more abundance in neurons.

The protein localises to the lysosome membrane. Its activity is regulated as follows. The GATOR2 complex is negatively regulated by the upstream amino acid sensors CASTOR1 and SESN2, which sequester the GATOR2 complex in absence of amino acids. In the presence of abundant amino acids, GATOR2 is released from CASTOR1 and SESN2 and activated. Its function is as follows. As a component of the GATOR2 complex, functions as an activator of the amino acid-sensing branch of the mTORC1 signaling pathway. The GATOR2 complex indirectly activates mTORC1 through the inhibition of the GATOR1 subcomplex. GATOR2 probably acts as an E3 ubiquitin-protein ligase toward GATOR1. In the presence of abundant amino acids, the GATOR2 complex mediates ubiquitination of the NPRL2 core component of the GATOR1 complex, leading to GATOR1 inactivation. In the absence of amino acids, GATOR2 is inhibited, activating the GATOR1 complex. Within the GATOR2 complex, MIOS is required to prevent autoubiquitination of WDR24, the catalytic subunit of the complex. The GATOR2 complex is required for brain myelination. The chain is GATOR2 complex protein MIOS from Mus musculus (Mouse).